The chain runs to 641 residues: Protein TIC 62, chloroplastic (641 aa).

The transit peptide at 1–63 (MEGTCFLRGQ…LSLRASGPIR (63 aa)) directs the protein to the chloroplast. N-acetylalanine is present on Ala64. 84–113 (VFVAGATGKVGSRTVRELLKLGFRVRAGVR) is an NADP(+) binding site. Residues 328-641 (SKRPYVPPPK…SPLPSPVTNH (314 aa)) form a disordered region. Positions 359 to 372 (APKEDEAPPKEKNV) are enriched in basic and acidic residues. Tandem repeats lie at residues 376–397 (PLSPYASYEDLKPPTSPIPNST) and 444–465 (PLSPYARYENLKPPSSPSPTAS). The segment at 376 to 638 (PLSPYASYED…PPTSPLPSPV (263 aa)) is 4 X 22 AA approximate repeats. Residues 393-402 (IPNSTTSVSP) are compositionally biased toward low complexity. Residues 435-444 (KQVEEKKERP) are compositionally biased toward basic and acidic residues. The span at 485–528 (SSTVAKTVTETAVATSVTETSVATSVPETAVATSVTETAAPATS) shows a compositional bias: low complexity. Repeat unit 3 spans residues 532 to 553 (PLSPYAIYADLKPPTSPTPAST). A compositionally biased stretch (polar residues) spans 599–612 (AIDTSLASGDNTAQ). Copy 4 of the repeat occupies 617–638 (PLSPYTMYADMKPPTSPLPSPV). Residues 630 to 641 (PTSPLPSPVTNH) are compositionally biased toward pro residues.

In terms of assembly, part of the Tic complex. Interacts with TIC110 and TIC55. Interacts with LFNR1 and LFNR2. Component of high molecular weight thylakoid LFNRs-containing protein complexes containing LIR1, LFNR1, LFNR2, TIC62 and TROL proteins. As to expression, expressed in cotyledons and leaves, but not in roots.

Its subcellular location is the plastid. The protein resides in the chloroplast inner membrane. The protein localises to the chloroplast stroma. It localises to the chloroplast thylakoid. In terms of biological role, involved in protein precursor import into chloroplasts. Part of the redox regulon consisting of TIC32, TIC 55 and TIC62. Acts as a membrane anchor of LFNR1 and LFNR2. Has a NADPH-dependent dehydrogenase activity, but only after preincubation with lipids. This is Protein TIC 62, chloroplastic from Arabidopsis thaliana (Mouse-ear cress).